A 235-amino-acid polypeptide reads, in one-letter code: Purine nucleoside phosphorylase DeoD-type (235 aa).

Position 4 (H4) interacts with a purine D-ribonucleoside. Residues G20, R24, R43, and 87–90 each bind phosphate; that span reads RVGT. A purine D-ribonucleoside-binding positions include E162, 179–181, and 203–204; these read EME and SD. D204 functions as the Proton donor in the catalytic mechanism.

It belongs to the PNP/UDP phosphorylase family. In terms of assembly, homohexamer; trimer of homodimers.

It catalyses the reaction a purine D-ribonucleoside + phosphate = a purine nucleobase + alpha-D-ribose 1-phosphate. The catalysed reaction is a purine 2'-deoxy-D-ribonucleoside + phosphate = a purine nucleobase + 2-deoxy-alpha-D-ribose 1-phosphate. Catalyzes the reversible phosphorolytic breakdown of the N-glycosidic bond in the beta-(deoxy)ribonucleoside molecules, with the formation of the corresponding free purine bases and pentose-1-phosphate. The sequence is that of Purine nucleoside phosphorylase DeoD-type from Bacillus anthracis (strain CDC 684 / NRRL 3495).